The following is a 312-amino-acid chain: Malate dehydrogenase (312 aa).

Residues 7-13 and Asp34 each bind NAD(+); that span reads GAAGGIG. The substrate site is built by Arg81 and Arg87. NAD(+)-binding positions include Asn94 and 117 to 119; that span reads ITN. Substrate-binding residues include Asn119 and Arg153. The active-site Proton acceptor is His177. Residue Met227 coordinates NAD(+).

This sequence belongs to the LDH/MDH superfamily. MDH type 1 family. As to quaternary structure, homodimer.

It carries out the reaction (S)-malate + NAD(+) = oxaloacetate + NADH + H(+). In terms of biological role, catalyzes the reversible oxidation of malate to oxaloacetate. The polypeptide is Malate dehydrogenase (Escherichia coli O6:K15:H31 (strain 536 / UPEC)).